We begin with the raw amino-acid sequence, 1325 residues long: NHS-like protein 3 (1325 aa).

The stretch at 53–85 forms a coiled coil; it reads LEDLHTEAQEGLKILQQEEEDTSSKERNESLEN. Disordered stretches follow at residues 68 to 92, 111 to 131, 291 to 348, 368 to 570, 595 to 614, 829 to 891, 935 to 981, 1084 to 1138, 1243 to 1272, and 1293 to 1313; these read QQEE…SGHS, QGST…KRRS, CSAS…KGKC, MSVS…AKTS, QTNT…TTVK, EVNG…MEES, LLST…VSEF, VGED…SSAV, GTKK…ENAT, and SDQV…EQAS. Residues 296–334 show a composition bias toward low complexity; it reads ASKGSMASASPSSSRSGSGTNQAPPTTSPSRSNSQSSET. Positions 335–344 are enriched in polar residues; the sequence is IVSNSSTISS. A compositionally biased stretch (low complexity) spans 369–378; the sequence is SVSSSSSWKS. The span at 400–412 shows a compositional bias: polar residues; the sequence is VRNSHSFSRSLSV. Positions 428-447 are enriched in basic and acidic residues; sequence LHHENMQRQREQGDIQDPKD. The span at 450–460 shows a compositional bias: polar residues; the sequence is PNNNEQTNRDI. Over residues 515–524 the composition is skewed to basic and acidic residues; sequence KTRECGENFD. Positions 528–541 are enriched in low complexity; the sequence is SPSSGYSSQSGTPT. The span at 834–850 shows a compositional bias: pro residues; it reads SPPPSPPPEHHPPPPPI. Polar residues-rich tracts occupy residues 935-948 and 1088-1100; these read LLST…SSPE and QVNN…TEPT. Positions 1124-1138 are enriched in low complexity; that stretch reads KSNSPAKSSSASSAV. Residues 1302-1311 show a composition bias toward polar residues; the sequence is RAQSLGNQEQ.

Its function is as follows. Able to directly activate the TNF-NFkappaB signaling pathway. This is NHS-like protein 3 (nhsl3) from Danio rerio (Zebrafish).